Consider the following 1169-residue polypeptide: Pesticidal crystal protein Cry8Ba (1169 aa).

The disordered stretch occupies residues 1–26 (MSPNNQNEYEIIDATPSTSVSNDSNR). Residues 15 to 25 (TPSTSVSNDSN) show a composition bias toward polar residues.

This sequence belongs to the delta endotoxin family.

In terms of biological role, promotes colloidosmotic lysis by binding to the midgut epithelial cells of insects. Active on various scarabaeid beetles. The protein is Pesticidal crystal protein Cry8Ba (cry8Ba) of Bacillus thuringiensis serovar kumamotoensis.